Here is a 367-residue protein sequence, read N- to C-terminus: Cobalt-precorrin-5B C(1)-methyltransferase (367 aa).

Belongs to the CbiD family.

The enzyme catalyses Co-precorrin-5B + S-adenosyl-L-methionine = Co-precorrin-6A + S-adenosyl-L-homocysteine. The protein operates within cofactor biosynthesis; adenosylcobalamin biosynthesis; cob(II)yrinate a,c-diamide from sirohydrochlorin (anaerobic route): step 6/10. Functionally, catalyzes the methylation of C-1 in cobalt-precorrin-5B to form cobalt-precorrin-6A. The protein is Cobalt-precorrin-5B C(1)-methyltransferase of Thermosynechococcus vestitus (strain NIES-2133 / IAM M-273 / BP-1).